A 262-amino-acid chain; its full sequence is Tryptophan synthase alpha chain (262 aa).

Residues Glu48 and Asp59 each act as proton acceptor in the active site.

This sequence belongs to the TrpA family. In terms of assembly, tetramer of two alpha and two beta chains.

The enzyme catalyses (1S,2R)-1-C-(indol-3-yl)glycerol 3-phosphate + L-serine = D-glyceraldehyde 3-phosphate + L-tryptophan + H2O. It functions in the pathway amino-acid biosynthesis; L-tryptophan biosynthesis; L-tryptophan from chorismate: step 5/5. The alpha subunit is responsible for the aldol cleavage of indoleglycerol phosphate to indole and glyceraldehyde 3-phosphate. This chain is Tryptophan synthase alpha chain, found in Helicobacter pylori (strain ATCC 700392 / 26695) (Campylobacter pylori).